A 656-amino-acid polypeptide reads, in one-letter code: Tetratricopeptide repeat protein 30 homolog (656 aa).

9 TPR repeats span residues 9 to 42 (EGEF…NPKN), 43 to 76 (LAAL…FPQY), 141 to 174 (AAVI…SGYQ), 176 to 208 (GLAY…GVKD), 238 to 271 (IEAF…NEHD), 378 to 412 (RKTA…DDSL), 416 to 449 (LPVL…CKEH), 451 to 484 (TWKL…KYDD), and 537 to 570 (SIIS…PEKK).

This sequence belongs to the TTC30/dfy-1/fleer family. As to quaternary structure, component of the IFT complex B composed of at least che-2, che-13, dyf-1, dyf-3, dyf-6, dyf-11, dyf-13, ift-20, ift-74, ift-81, ifta-2, osm-1, osm-5 and osm-6. Expressed in most amphid, both phasmid and several labial-quadrant neurons.

The protein localises to the cell projection. It localises to the cilium. Plays a role in anterograde intraflagellar transport (IFT), the process by which cilia precursors are transported from the base of the cilium to the site of their incorporation at the tip. Specifically required for the kinesin osm-3 to dock onto and move the IFT particles which contain these precursors. Component of the intraflagellar transport (IFT) complex B required for transport of proteins in the motile cilium. May be required for ciliary entrance and transport of specific ciliary cargo proteins such as che-3 which are related to motility. Required for polyglutamylation of axonemal tubulin in sensory cilia. This Caenorhabditis elegans protein is Tetratricopeptide repeat protein 30 homolog.